The primary structure comprises 191 residues: Accessory gene regulator protein B (191 aa).

Transmembrane regions (helical) follow at residues 45–65, 81–101, 108–128, 144–164, and 165–185; these read IVVY…TVHL, STFA…WILI, IFMI…SPAI, ITAI…KQPF, and NELV…IFFP.

The protein belongs to the AgrB family.

The protein localises to the cell membrane. Essential for the production of a quorum sensing system signal molecule, the autoinducing peptide (AIP). This quorum sensing system is responsible for the regulation of the expression of virulence factor genes. Involved in the proteolytic processing of AgrD, the precursor of AIP. This is Accessory gene regulator protein B from Staphylococcus carnosus (strain TM300).